We begin with the raw amino-acid sequence, 279 residues long: Estrogen receptor beta (279 aa).

One can recognise an NR LBD domain in the interval 27-261; the sequence is SPEQLVLTLL…DLLLEMLNAH (235 aa).

Belongs to the nuclear hormone receptor family. NR3 subfamily. As to quaternary structure, binds DNA as a homodimer. Can form a heterodimer with ESR1. Interacts with NCOA1, NCOA3, NCOA5 and NCOA6 coactivators, leading to a strong increase of transcription of target genes. Interacts with UBE1C and AKAP13. Interacts with DNTTIP2. Interacts with CCDC62 in the presence of estradiol/E2; this interaction seems to enhance the transcription of target genes. Interacts with DNAAF4. Interacts with PRMT2. Interacts with CCAR2 (via N-terminus) in a ligand-independent manner. Interacts with RBM39, in the presence of estradiol (E2). Interacts with STUB1/CHIP.

It is found in the nucleus. Functionally, nuclear hormone receptor. Binds estrogens with an affinity similar to that of ESR1/ER-alpha, and activates expression of reporter genes containing estrogen response elements (ERE) in an estrogen-dependent manner. The protein is Estrogen receptor beta (ESR2) of Macaca mulatta (Rhesus macaque).